The following is a 105-amino-acid chain: uncharacterized protein (105 aa).

This is an uncharacterized protein from Escherichia coli (Bacteriophage T4).